Consider the following 121-residue polypeptide: Large ribosomal subunit protein bL12 (121 aa).

It belongs to the bacterial ribosomal protein bL12 family. As to quaternary structure, homodimer. Part of the ribosomal stalk of the 50S ribosomal subunit. Forms a multimeric L10(L12)X complex, where L10 forms an elongated spine to which 2 to 4 L12 dimers bind in a sequential fashion. Binds GTP-bound translation factors.

Forms part of the ribosomal stalk which helps the ribosome interact with GTP-bound translation factors. Is thus essential for accurate translation. The protein is Large ribosomal subunit protein bL12 of Enterobacter sp. (strain 638).